A 1363-amino-acid polypeptide reads, in one-letter code: MTLEQELRQLSKAKTRAQRNGQLREEAAYCHQLGELLASHGRFKDALEEHQQELHLLESVQDTLGCAVAHRKIGERLAEMENYSAALKHQHLYLDLAGSLSNHTELQRAWATIGRTHLDIYDHCQSRDSLLQAQAAFEKSLAIVDEKLEGMLTQRELSEMRTRLYLNLGLTCESLQQTALCNNYFKKSIFLAEQNHLYEDLFRARYNLGAIHWRGGQHSQAMRCLEGARECARAMKMRFMESECCVLVSQVLQDLGDFLAAKRALKKAYRLGSQKPNQRVTVCQSLKYVLAVIQLQQQLEEAEGNDLQGAMAICEQLGDLFSKAGDFPKAAEAYQKQLHLAELLNRPDLELAVIHVSLATTLGDMKDHRKAVHHYEEELRLRKGNALEEAKTWFNIALSREEAGDAYELLAPCFQKAFCCAQQAQRFQLQRQILQHLYTVQLKLQPQEARDTEIRLQELSMAKDTEEEEEEEEEEEEEASEAPETSELELSESEDDADGLSQQLEEDEELQGCVGRRKVNKWNRRNDMGETLLHRACIEGQLRRVQDLVKQGHPLNPRDYCGWTPLHEACNYGHLEIVRFLLDHGAAVDDPGGQGCDGITPLHDALNCGHFEVAELLIERGASVTLRTRKGLSPLETLQQWVKLYFRDLDLETRQKAATMEERLQMASSGQASRSSPALQTIPSNHLFDPETSPPSSPCPEPSSYTPRPPEASPAPAKVFLEETVSAVSRPRKTRHRPTSSSSSSEDEDNPSPCRPSQKRLRHTTQQGEVKIPDPPKSRETATSSACRAAYQAAIRGVGSAQSRRLVPSLPRGSEEVPAPKTALIPEEEYLAGEWLEVDTPLTRSGRPSTSVSDYERCPARPRTRVKQSRLTSLDGWCARTQAGDGSLNAEPAENPSVPRTSGPNKENYAAGQPLLLVQPPPIRVRVQIQDNLFLIPVPQSDIRPVAWLTEQAAQRYFQTCGLLPRLTLRKDGALLAPQDPIPDVLQSNDEVLAEVTSWDLPPLKDRYRRACLSLGQGEHQQVLHAMDHQSSSPSFSACSLALCQAQLTPLLRALKLHTALRELRLAGNRLGDACATELLATLGTTPNLVLLDLSSNHLGQEGLRQLVEGSSGQAALQNLEELDLSMNPLGDGCGQALASLLRACPMLSTLRLQACGFSSSFFLSHQAALGGAFQDAVHLKTLSLSYNLLGAPALARVLQTLPACTLKRLDLSSVAASKSNSGIIEPVIKYLTKEGCALAHLTLSANCLGDKAVRELSRCLPCCPSLTSLDLSANPEVSCASLEELLSALQERSQGLSFLGLSGCSIQGPLNSDLWDKIFVQLQELQLCTKDLSTKDRDSVCQRLPEGACTMDQSSKLFFKCL.

8 TPR repeats span residues 27 to 60 (AAYC…LESV), 67 to 100 (AVAH…AGSL), 107 to 147 (QRAW…VDEK), 162 to 195 (TRLY…AEQN), 202 to 235 (FRAR…ARAM), 242 to 275 (SECC…GSQK), 311 to 344 (MAIC…AELL), and 352 to 385 (AVIH…RKGN). Residues 460–511 (SMAKDTEEEEEEEEEEEEEASEAPETSELELSESEDDADGLSQQLEEDEELQ) form a disordered region. Residues 465-510 (TEEEEEEEEEEEEEASEAPETSELELSESEDDADGLSQQLEEDEEL) show a composition bias toward acidic residues. ANK repeat units follow at residues 528–557 (MGET…PLNP), 561–590 (CGWT…AVDD), and 597–626 (DGIT…SVTL). Residues 662–786 (ERLQMASSGQ…KSRETATSSA (125 aa)) form a disordered region. Positions 666–684 (MASSGQASRSSPALQTIPS) are enriched in polar residues. The segment covering 692–713 (TSPPSSPCPEPSSYTPRPPEAS) has biased composition (pro residues). A compositionally biased stretch (basic and acidic residues) spans 771–780 (KIPDPPKSRE). An Omega-N-methylarginine modification is found at Arg-796. Disordered stretches follow at residues 841 to 866 (PLTR…RTRV) and 883 to 909 (AGDG…KENY). Residues 842-853 (LTRSGRPSTSVS) show a composition bias toward polar residues. LRR repeat units follow at residues 1060 to 1081 (ALRE…ELLA), 1088 to 1108 (NLVL…RQLV), 1119 to 1140 (NLEE…ALAS), 1147 to 1168 (MLST…SHQA), 1179 to 1199 (HLKT…ARVL), 1206 to 1214 (TLKRLDLSS), 1238 to 1261 (ALAH…SRCL), 1266 to 1287 (SLTS…EELL), 1296 to 1317 (GLSF…DLWD), and 1322 to 1343 (QLQE…SVCQ).

The protein belongs to the Tonsoku family. As to quaternary structure, component of the MMS22L-TONSL complex, a complex at least composed of MMS22L and TONSL/NFKBIL2. Interacts with the MCM complex, the FACT complex and the RPA complex. Interacts with MCM5; the interaction is direct. Binds histones, with a strong preference for histone H3.1 (histones H3.1 and H3-4/H3.1t). Interacts (via ANK repeats) with histone H4; specifically binds histone H4 lacking methylation at 'Lys-20' (H4K20me0). May interact with DNAJC9; the interaction seems to be histone-dependent.

Its subcellular location is the nucleus. The protein localises to the chromosome. It is found in the cytoplasm. Functionally, component of the MMS22L-TONSL complex, a complex that promotes homologous recombination-mediated repair of double-strand breaks (DSBs) at stalled or collapsed replication forks. The MMS22L-TONSL complex is required to maintain genome integrity during DNA replication. It mediates the assembly of RAD51 filaments on single-stranded DNA (ssDNA): the MMS22L-TONSL complex is recruited to DSBs following histone replacement by histone chaperones and eviction of the replication protein A complex (RPA/RP-A) from DSBs. Following recruitment to DSBs, the TONSL-MMS22L complex promotes recruitment of RAD51 filaments and subsequent homologous recombination. Within the complex, TONSL acts as a histone reader, which recognizes and binds newly synthesized histones following their replacement by histone chaperones. Specifically binds histone H4 lacking methylation at 'Lys-20' (H4K20me0) and histone H3.1. The polypeptide is Tonsoku-like protein (Mus musculus (Mouse)).